The primary structure comprises 352 residues: C-C chemokine receptor type 5 (352 aa).

Topologically, residues 1 to 30 are extracellular; it reads MDYQVSSPTYDIDYYTSEPCQKINVKQIAA. Sulfotyrosine is present on tyrosine 3. O-linked (GalNAc...) serine glycosylation is found at serine 6 and serine 7. Residues tyrosine 10, tyrosine 14, and tyrosine 15 each carry the sulfotyrosine modification. 2 disulfide bridges follow: cysteine 20–cysteine 269 and cysteine 101–cysteine 178. A helical transmembrane segment spans residues 31–58; that stretch reads RLLPPLYSLVFIFGFVGNILVVLILINC. At 59–68 the chain is on the cytoplasmic side; that stretch reads KRLKSMTDIY. The chain crosses the membrane as a helical span at residues 69 to 89; it reads LLNLAISDLLFLLTVPFWAHY. The Extracellular portion of the chain corresponds to 90-102; it reads AAAQWDFGNTMCQ. The helical transmembrane segment at 103 to 124 threads the bilayer; the sequence is LLTGLYFIGFFSGIFFIILLTI. Topologically, residues 125 to 141 are cytoplasmic; the sequence is DRYLAIVHAVFALKART. Residues 142–166 traverse the membrane as a helical segment; that stretch reads VTFGVVTSVITWVVAVFASLPRIIF. At 167-198 the chain is on the extracellular side; it reads TTSHRERLHYTCSSHFPYSQYQFWKNFHTLKI. Residues 199–218 form a helical membrane-spanning segment; sequence VILGLVLPLLVMVICYSGIL. The Cytoplasmic segment spans residues 219-235; that stretch reads KTLLRCRNEKKRHRAVR. The chain crosses the membrane as a helical span at residues 236 to 260; it reads LIFTIMIVYFLFWAPYNIVLLLNTF. The Extracellular portion of the chain corresponds to 261-277; the sequence is QEFFGLNNCSSSNRLDQ. The chain crosses the membrane as a helical span at residues 278-301; the sequence is AMQVTETLGMTHCCINPIIYAFVG. Residues 302-352 are Cytoplasmic-facing; it reads EKFRNYLLVFFQKHIAKRFCKCCSIFQQEAPERASSVYTRSTGEQEISVGL. Residues cysteine 321, cysteine 323, and cysteine 324 are each lipidated (S-palmitoyl cysteine). Residues serine 336, serine 337, serine 342, and serine 349 each carry the phosphoserine; by BARK1 modification.

It belongs to the G-protein coupled receptor 1 family. Interacts with PRAF2. Efficient ligand binding to CCL3/MIP-1alpha and CCL4/MIP-1beta requires sulfation, O-glycosylation and sialic acid modifications. Glycosylation on Ser-6 is required for efficient binding of CCL4. Interacts with GRK2. Interacts with ARRB1 and ARRB2. Interacts with CNIH4. Interacts with S100A4; this interaction stimulates T-lymphocyte chemotaxis. In terms of processing, sulfated on at least 2 of the N-terminal tyrosines. Sulfation is required for efficient binding of the chemokines, CCL3 and CCL4. Post-translationally, palmitoylation in the C-terminal is important for cell surface expression. Phosphorylation on serine residues in the C-terminal is stimulated by binding CC chemokines especially by APO-RANTES. In terms of processing, O-glycosylated, but not N-glycosylated. Ser-6 appears to be the major site even if Ser-7 may be also O-glycosylated. Also sialylated glycans present which contribute to chemokine binding. Thr-16 and Ser-17 may also be glycosylated and, if so, with small moieties such as a T-antigen.

It is found in the cell membrane. Receptor for a number of inflammatory CC-chemokines including CCL3/MIP-1-alpha, CCL4/MIP-1-beta and RANTES and subsequently transduces a signal by increasing the intracellular calcium ion level. May play a role in the control of granulocytic lineage proliferation or differentiation. Participates in T-lymphocyte migration to the infection site by acting as a chemotactic receptor. This is C-C chemokine receptor type 5 (CCR5) from Cercopithecus ascanius (Black-cheeked white-nosed monkey).